The primary structure comprises 339 residues: Peroxidase 29 (339 aa).

Positions 1-28 (MKPKSKVAESTAASCFLVMSLLCSCIIG) are cleaved as a signal peptide. Intrachain disulfides connect cysteine 47–cysteine 127, cysteine 80–cysteine 85, cysteine 133–cysteine 335, and cysteine 213–cysteine 242. Histidine 78 acts as the Proton acceptor in catalysis. Aspartate 79, valine 82, glycine 84, aspartate 86, and serine 88 together coordinate Ca(2+). Proline 176 provides a ligand contact to substrate. Residue histidine 206 coordinates heme b. Position 207 (threonine 207) interacts with Ca(2+). The N-linked (GlcNAc...) asparagine glycan is linked to asparagine 224. Positions 260, 262, and 267 each coordinate Ca(2+).

The protein belongs to the peroxidase family. Classical plant (class III) peroxidase subfamily. Heme b serves as cofactor. It depends on Ca(2+) as a cofactor.

Its subcellular location is the secreted. It catalyses the reaction 2 a phenolic donor + H2O2 = 2 a phenolic radical donor + 2 H2O. Removal of H(2)O(2), oxidation of toxic reductants, biosynthesis and degradation of lignin, suberization, auxin catabolism, response to environmental stresses such as wounding, pathogen attack and oxidative stress. These functions might be dependent on each isozyme/isoform in each plant tissue. The polypeptide is Peroxidase 29 (PER29) (Arabidopsis thaliana (Mouse-ear cress)).